The primary structure comprises 247 residues: Myeloid leukemia factor 2 (247 aa).

The segment at 122–247 (ETSEMRSAPG…PSRQSRRYDW (126 aa)) is disordered. Residues 134-144 (RETRRTVRDSD) are compositionally biased toward basic and acidic residues. Residues 154-169 (HHIRDRAHILQRSRNH) are compositionally biased toward basic residues. A compositionally biased stretch (basic and acidic residues) spans 170–179 (RTGDQEERQD). Acidic residues predominate over residues 182 to 192 (NLDESEAAAFD). Positions 193 to 225 (DEWRRETSRYRQQRPLEFRRHEASVGGGRRAEG) are enriched in basic and acidic residues. Phosphoserine occurs at positions 216, 237, and 239.

Belongs to the MLF family.

Its subcellular location is the cytoplasm. It localises to the nucleus. This chain is Myeloid leukemia factor 2 (Mlf2), found in Mus musculus (Mouse).